The chain runs to 223 residues: Ribonuclease 3 (223 aa).

The RNase III domain maps to 4-127; it reads LNRLEEHLGY…LMGAIYLESG (124 aa). Glu-40 is a Mg(2+) binding site. Asp-44 is a catalytic residue. 2 residues coordinate Mg(2+): Asp-113 and Glu-116. Residue Glu-116 is part of the active site. The 70-residue stretch at 154–223 folds into the DRBM domain; it reads DYKTTLQEIT…AWKVLQGMNI (70 aa).

Belongs to the ribonuclease III family. As to quaternary structure, homodimer. Requires Mg(2+) as cofactor.

Its subcellular location is the cytoplasm. The enzyme catalyses Endonucleolytic cleavage to 5'-phosphomonoester.. In terms of biological role, digests double-stranded RNA. Involved in the processing of primary rRNA transcript to yield the immediate precursors to the large and small rRNAs (23S and 16S). Processes some mRNAs, and tRNAs when they are encoded in the rRNA operon. Processes pre-crRNA and tracrRNA of type II CRISPR loci if present in the organism. The polypeptide is Ribonuclease 3 (Campylobacter fetus subsp. fetus (strain 82-40)).